The following is a 227-amino-acid chain: MSEGSVIFKGSLNGLTIIMKEEEDYDSILKQIEDKIASSGRFFKGAILSVKYRGKKLTEEQERKLFELLRDKSGAKIKSLEEDTEEPVKPEPVQQQPRFRSKIRMSNFYFKGLEEGITKFHRGTVRSGQLVSFDGNLVIIGDVNPGGEVCATGHVIVMGSLRGMVHAGANGNREALVVALNLQPTQLRIADVITRPPDEKETVGQFFPELAYIKDGMVYIERYLPAR.

This sequence belongs to the MinC family. In terms of assembly, interacts with MinD and FtsZ.

Its function is as follows. Cell division inhibitor that blocks the formation of polar Z ring septums. Rapidly oscillates between the poles of the cell to destabilize FtsZ filaments that have formed before they mature into polar Z rings. Prevents FtsZ polymerization. This Acetivibrio thermocellus (strain ATCC 27405 / DSM 1237 / JCM 9322 / NBRC 103400 / NCIMB 10682 / NRRL B-4536 / VPI 7372) (Clostridium thermocellum) protein is Probable septum site-determining protein MinC.